The sequence spans 139 residues: Histone H2B.11 (139 aa).

Positions 1 to 39 (MAPKAEKKPAEKKPVEEKAEKKPKAEKRVPGAKEGGGEK) are enriched in basic and acidic residues. The tract at residues 1–47 (MAPKAEKKPAEKKPVEEKAEKKPKAEKRVPGAKEGGGEKKGKKKAKK) is disordered. N6-acetyllysine is present on residues Lys7 and Lys27. Residue Lys135 forms a Glycyl lysine isopeptide (Lys-Gly) (interchain with G-Cter in ubiquitin) linkage.

It belongs to the histone H2B family. In terms of assembly, the nucleosome is a histone octamer containing two molecules each of H2A, H2B, H3 and H4 assembled in one H3-H4 heterotetramer and two H2A-H2B heterodimers. The octamer wraps approximately 147 bp of DNA. Can be acetylated to form H2BK6ac and H2BK33ac. In terms of processing, monoubiquitinated by BRE1 to form H2BK143ub1 and deubiquitinated by UBP26. Required for heterochromatic histone H3 di- and trimethylation at H3K4me. May give a specific tag for epigenetic transcriptional activation.

The protein resides in the nucleus. It localises to the chromosome. Its function is as follows. Core component of nucleosome. Nucleosomes wrap and compact DNA into chromatin, limiting DNA accessibility to the cellular machineries which require DNA as a template. Histones thereby play a central role in transcription regulation, DNA repair, DNA replication and chromosomal stability. DNA accessibility is regulated via a complex set of post-translational modifications of histones, also called histone code, and nucleosome remodeling. The chain is Histone H2B.11 (H2B.11) from Oryza sativa subsp. indica (Rice).